A 115-amino-acid polypeptide reads, in one-letter code: Large ribosomal subunit protein bL20 (115 aa).

The protein belongs to the bacterial ribosomal protein bL20 family.

Functionally, binds directly to 23S ribosomal RNA and is necessary for the in vitro assembly process of the 50S ribosomal subunit. It is not involved in the protein synthesizing functions of that subunit. The sequence is that of Large ribosomal subunit protein bL20 from Prochlorococcus marinus (strain MIT 9303).